The sequence spans 353 residues: Dihydroorotate dehydrogenase (quinone) (353 aa).

Residues 67–71 (AGFDK) and T91 contribute to the FMN site. K71 contributes to the substrate binding site. 116–120 (NRMGF) serves as a coordination point for substrate. Residues N144 and N177 each contribute to the FMN site. N177 is a binding site for substrate. S180 functions as the Nucleophile in the catalytic mechanism. Residue N182 coordinates substrate. FMN contacts are provided by K213 and T241. Residue 242–243 (NT) participates in substrate binding. FMN contacts are provided by residues G265, G294, and 315–316 (YT).

The protein belongs to the dihydroorotate dehydrogenase family. Type 2 subfamily. Monomer. Requires FMN as cofactor.

It is found in the cell membrane. The enzyme catalyses (S)-dihydroorotate + a quinone = orotate + a quinol. The protein operates within pyrimidine metabolism; UMP biosynthesis via de novo pathway; orotate from (S)-dihydroorotate (quinone route): step 1/1. In terms of biological role, catalyzes the conversion of dihydroorotate to orotate with quinone as electron acceptor. The sequence is that of Dihydroorotate dehydrogenase (quinone) from Mycobacteroides abscessus (strain ATCC 19977 / DSM 44196 / CCUG 20993 / CIP 104536 / JCM 13569 / NCTC 13031 / TMC 1543 / L948) (Mycobacterium abscessus).